The sequence spans 309 residues: Pseudouridine-5'-phosphate glycosidase 2 (309 aa).

E26 serves as the catalytic Proton donor. The substrate site is built by K87 and V107. Mn(2+) is bound at residue D139. 141–143 (SAD) contributes to the substrate binding site. Residue K160 is the Nucleophile of the active site.

The protein belongs to the pseudouridine-5'-phosphate glycosidase family. As to quaternary structure, homotrimer. Mn(2+) is required as a cofactor.

The catalysed reaction is D-ribose 5-phosphate + uracil = psi-UMP + H2O. In terms of biological role, catalyzes the reversible cleavage of pseudouridine 5'-phosphate (PsiMP) to ribose 5-phosphate and uracil. Functions biologically in the cleavage direction, as part of a pseudouridine degradation pathway. This is Pseudouridine-5'-phosphate glycosidase 2 from Rhizobium johnstonii (strain DSM 114642 / LMG 32736 / 3841) (Rhizobium leguminosarum bv. viciae).